The following is a 1172-amino-acid chain: Laminin subunit beta-3 (1172 aa).

The first 17 residues, 1 to 17 (MRPFFLLCFALPGLLHA), serve as a signal peptide directing secretion. The Laminin N-terminal domain maps to 22–249 (SRGACYPPVG…AVSQLRLQGS (228 aa)). An N-linked (GlcNAc...) asparagine glycan is attached at N220. Intrachain disulfides connect C250/C259, C252/C279, C281/C290, C293/C313, C316/C325, C318/C343, C346/C355, C358/C376, C379/C392, C381/C399, C401/C410, C413/C428, C431/C444, C433/C451, C453/C462, C465/C478, C481/C493, C483/C500, C502/C511, C519/C531, C534/C546, C536/C553, C555/C564, and C567/C578. 6 Laminin EGF-like domains span residues 250–315 (CFCH…ECQR), 316–378 (CDCN…TCIS), 379–430 (CECD…GCHR), 431–480 (CDCN…GCEP), 481–533 (CACD…GCRA), and 534–580 (CDCD…VCVA). The interval 579–785 (VACHPCFQTY…SLPDLTPTFN (207 aa)) is domain II. Residue N604 is glycosylated (N-linked (GlcNAc...) asparagine). Residues 723 to 757 (EQSAQAAQQVSDSSRLLDQLRDSRREAERLVRQAG) are a coiled coil. The segment at 786–816 (KLCGNSRQMACTPISCPGELCPQDNGTACGS) is domain alpha. N-linked (GlcNAc...) asparagine glycosylation is present at N810. Residues 817–1170 (RCRGVLPRAG…INGRVLYYAT (354 aa)) form a domain I region. Coiled coils occupy residues 831-884 (MAGQ…MEED) and 948-1133 (VLSQ…ELEL).

Laminin is a complex glycoprotein, consisting of three different polypeptide chains (alpha, beta, gamma), which are bound to each other by disulfide bonds into a cross-shaped molecule comprising one long and three short arms with globules at each end. Beta-3 is a subunit of laminin-5 (laminin-332 or epiligrin/kalinin/nicein). Interacts with ECM1. Found in the basement membranes (major component).

The protein resides in the secreted. Its subcellular location is the extracellular space. The protein localises to the extracellular matrix. It is found in the basement membrane. Functionally, binding to cells via a high affinity receptor, laminin is thought to mediate the attachment, migration and organization of cells into tissues during embryonic development by interacting with other extracellular matrix components. This chain is Laminin subunit beta-3 (LAMB3), found in Homo sapiens (Human).